The chain runs to 49 residues: Large ribosomal subunit protein bL33B (49 aa).

The protein belongs to the bacterial ribosomal protein bL33 family.

This chain is Large ribosomal subunit protein bL33B (rpmG2), found in Lactococcus lactis subsp. lactis (strain IL1403) (Streptococcus lactis).